We begin with the raw amino-acid sequence, 1271 residues long: DNA-directed RNA polymerase subunit beta (1271 aa).

Belongs to the RNA polymerase beta chain family. As to quaternary structure, the RNAP catalytic core consists of 2 alpha, 1 beta, 1 beta' and 1 omega subunit. When a sigma factor is associated with the core the holoenzyme is formed, which can initiate transcription.

The catalysed reaction is RNA(n) + a ribonucleoside 5'-triphosphate = RNA(n+1) + diphosphate. In terms of biological role, DNA-dependent RNA polymerase catalyzes the transcription of DNA into RNA using the four ribonucleoside triphosphates as substrates. This is DNA-directed RNA polymerase subunit beta from Acholeplasma laidlawii (strain PG-8A).